Reading from the N-terminus, the 394-residue chain is Probable nucleoredoxin 2 (394 aa).

2 Thioredoxin domains span residues 15 to 176 (GVGG…QTLE) and 180 to 327 (SVSG…EMED).

This sequence belongs to the nucleoredoxin family.

The catalysed reaction is [protein]-dithiol + NAD(+) = [protein]-disulfide + NADH + H(+). It carries out the reaction [protein]-dithiol + NADP(+) = [protein]-disulfide + NADPH + H(+). Its function is as follows. Probable thiol-disulfide oxidoreductase that may participate in various redox reactions. The polypeptide is Probable nucleoredoxin 2 (Oryza sativa subsp. japonica (Rice)).